A 32-amino-acid chain; its full sequence is Alpha-conotoxin RgIA (32 aa).

Positions Ser1–Arg19 are excised as a propeptide. 2 cysteine pairs are disulfide-bonded: Cys21/Cys27 and Cys22/Cys31.

Belongs to the conotoxin A superfamily. The disulfide bond CysI-CysIII is important for alpha-9-alpha-10 subtype inhibition, whereas the bond CysII-CysIV contributes to GABA(B) modulation. Expressed by the venom duct.

It is found in the secreted. Functionally, this toxin target two types of receptors, the nicotinic acetylcholine receptor (nAChR) and the G-protein-coupled receptor GABA(B). It specifically inhibits the alpha-9-alpha-10/CHRNA9-CHRNA10 nAChR, with preference for rat receptors. It interacts with the alpha-10(+)/alpha-9(-)interface of the receptor. It shows a two order of magnitude species difference potency for the rat versus human alpha-9-alpha-10 nAChR, due to the Thr-86 located in the alpha-9 nAChR subunit. This toxin also shows inhibition of high voltage-activated (HVA) calcium channels (Cav2.2) by acting on GABA(B) receptors (GABBR1 and GABBR2). In vivo, this toxin produces an acute antinociceptive effect in peripheral nerve-injured rats, which may be related to the inhibition of immune cell buildup at the site of nerve injury. In addition, when intramuscularly injected into rats following chronic constriction injury of the sciatic nerve, this toxin protects peripheral nervous tissues as well as prevents central maladaptive plasticity by inhibiting glial cell activation. This is Alpha-conotoxin RgIA from Conus regius (Crown cone).